Reading from the N-terminus, the 1303-residue chain is Endoplasmic reticulum transmembrane helix translocase spfA (1303 aa).

Helical transmembrane passes span 25 to 45 and 57 to 77; these read LHAYVWPFLIIWPAFFAVYLS and EWTFVWSGSIITAQSLLWLMT. An A-domain; part 1 region spans residues 158-191; that stretch reads KPPVKVFQQAQGLTSKEEIDRIQHHYGDNTFDIP. 2 helical membrane passes run 201–221 and 223–243; these read EHAVAPFFVFQVFCVGLWMLD and YWYYSLFTLFMLVVFESTVVW. The interval 256–408 is A-domain; part 2; the sequence is NIKPYDVWVY…LVRTMIYSTE (153 aa). Residue Asn287 is glycosylated (N-linked (GlcNAc...) asparagine). Residues 415 to 435 form a helical membrane-spanning segment; the sequence is VEALLFILFLLIFAIAAAWYV. Asn474 carries N-linked (GlcNAc...) asparagine glycosylation. Residues 484–513 are P-domain; part 1; sequence AIFCTEPFRIPFAGRVDVACFDKTGTLTGE. Asp505 acts as the 4-aspartylphosphate intermediate in catalysis. Mg(2+) contacts are provided by Asp505 and Thr507. Position 505–507 (505–507) interacts with ATP; that stretch reads DKT. The segment at 515-721 is N-domain; that stretch reads LVVDGIAGLT…FAGFLVLQCP (207 aa). An N-linked (GlcNAc...) asparagine glycan is attached at Asn589. The ATP site is built by Phe616 and Arg678. Residues 724–883 form a P-domain; part 2 region; that stretch reads EDAIKAVRML…HVGVALLNGS (160 aa). The N-linked (GlcNAc...) asparagine glycan is linked to Asn734. Residues Asp746 and 862–866 each bind ATP; that span reads DGTND. Position 862 (Asp862) interacts with Mg(2+). The segment at 884-1019 is arm-like; that stretch reads PEDLAKIAEH…ELDDSEPPTI (136 aa). An N-linked (GlcNAc...) asparagine glycan is attached at Asn958. Residues 1020 to 1035 form a P-domain; part 3 region; it reads KLGDASVAAPFTSKLA. 5 consecutive transmembrane segments (helical) span residues 1060–1080, 1082–1102, 1122–1142, 1201–1221, and 1239–1259; these read ILALNCLISAYSLSVIYLDGI, FGDGQVTISGMLMSVCFLSIS, VYIIGSVLGQFAIHIATLIYL, AMYWGLVAASGVAFSCATEFI, and VTLTVLMIIDYAGCWIIENVL. The segment at 1277-1303 is disordered; it reads DQLQREMERKKQEELETQAEKERQRKV.

The protein belongs to the cation transport ATPase (P-type) (TC 3.A.3) family. Type V subfamily. It depends on Mg(2+) as a cofactor.

The protein localises to the endoplasmic reticulum membrane. It carries out the reaction [protein]-with a C-terminal TM segment(out) + ATP + H2O = [protein]-with a C-terminal TM segment(in) + ADP + phosphate + H(+). With respect to regulation, the ATPase activity is stimulated by phosphatidylinositol 4-phosphate (PI4P). Its function is as follows. Endoplasmic reticulum (ER) translocase required to remove mitochondrial transmembrane proteins mistargeted to the endoplasmic reticulum. Acts as a dislocase that mediates the ATP-dependent extraction of mislocalized mitochondrial transmembrane proteins from the endoplasmic reticulum membrane. Works in concert with the ER Ca(2+) pump srcA to support ER homeostasis. With srcA, also supports redox homeostasis and virulence. This is Endoplasmic reticulum transmembrane helix translocase spfA from Aspergillus fumigatus (strain ATCC MYA-4609 / CBS 101355 / FGSC A1100 / Af293) (Neosartorya fumigata).